Here is a 218-residue protein sequence, read N- to C-terminus: Thiopurine S-methyltransferase (218 aa).

4 residues coordinate S-adenosyl-L-methionine: tryptophan 10, leucine 45, glutamate 66, and arginine 123.

The protein belongs to the class I-like SAM-binding methyltransferase superfamily. TPMT family.

The protein resides in the cytoplasm. The enzyme catalyses S-adenosyl-L-methionine + a thiopurine = S-adenosyl-L-homocysteine + a thiopurine S-methylether.. The sequence is that of Thiopurine S-methyltransferase from Shewanella baltica (strain OS155 / ATCC BAA-1091).